We begin with the raw amino-acid sequence, 282 residues long: Pantothenate synthetase (282 aa).

30–37 (MGYLHEGH) is a binding site for ATP. Catalysis depends on His37, which acts as the Proton donor. Gln61 is a binding site for (R)-pantoate. Gln61 contacts beta-alanine. ATP is bound at residue 147-150 (GMKD). Gln153 serves as a coordination point for (R)-pantoate. ATP-binding positions include Val176 and 184–187 (KSSR).

Belongs to the pantothenate synthetase family. As to quaternary structure, homodimer.

Its subcellular location is the cytoplasm. The catalysed reaction is (R)-pantoate + beta-alanine + ATP = (R)-pantothenate + AMP + diphosphate + H(+). Its pathway is cofactor biosynthesis; (R)-pantothenate biosynthesis; (R)-pantothenate from (R)-pantoate and beta-alanine: step 1/1. Its function is as follows. Catalyzes the condensation of pantoate with beta-alanine in an ATP-dependent reaction via a pantoyl-adenylate intermediate. In Bacillus cereus (strain ZK / E33L), this protein is Pantothenate synthetase.